Here is a 238-residue protein sequence, read N- to C-terminus: Photosynthetic NDH subunit of lumenal location 1, chloroplastic (238 aa).

The protein belongs to the PsbP family. Part of the chloroplast NDH complex, composed of a mixture of chloroplast and nucleus encoded subunits. Component of the NDH lumenal subcomplex, at least composed of PnsL1, PnsL2, PnsL3, PnsL4 and PnsL5.

Its subcellular location is the plastid. The protein localises to the chloroplast thylakoid membrane. Its function is as follows. NDH shuttles electrons from NAD(P)H:plastoquinone, via FMN and iron-sulfur (Fe-S) centers, to quinones in the photosynthetic chain and possibly in a chloroplast respiratory chain. The immediate electron acceptor for the enzyme in this species is believed to be plastoquinone. Couples the redox reaction to proton translocation, and thus conserves the redox energy in a proton gradient. Required for accumulation of the chloroplast NAD(P)H dehydrogenase (NDH) complex. This Arabidopsis thaliana (Mouse-ear cress) protein is Photosynthetic NDH subunit of lumenal location 1, chloroplastic.